Here is a 524-residue protein sequence, read N- to C-terminus: Probable beta-1,4-xylosyltransferase IRX14 (524 aa).

Residues 1 to 51 (MMKSLLPQSQLRRSAAAASAARSSGGGAGSGGADGAGSDGGAGGRAPATST) are Cytoplasmic-facing. The interval 21-41 (ARSSGGGAGSGGADGAGSDGG) is disordered. The segment covering 24–41 (SGGGAGSGGADGAGSDGG) has biased composition (gly residues). The chain crosses the membrane as a helical; Signal-anchor for type II membrane protein span at residues 52 to 71 (FWFLLHALCCLVSLFLGFRF). Topologically, residues 72 to 524 (SRLLFFLLFS…SRSTTKRKEN (453 aa)) are lumenal. N-linked (GlcNAc...) asparagine glycosylation is found at N132, N135, N240, and N353. Positions 492–524 (AELVDSKQDQEGRRLSRTDRSSRSRSTTKRKEN) are disordered. Positions 495–513 (VDSKQDQEGRRLSRTDRSS) are enriched in basic and acidic residues.

The protein belongs to the glycosyltransferase 43 family.

The protein localises to the golgi apparatus membrane. Functionally, probable beta-1,4-xylosyltransferase involved in xylan biosynthesis in cell walls. This is Probable beta-1,4-xylosyltransferase IRX14 from Oryza sativa subsp. japonica (Rice).